A 151-amino-acid polypeptide reads, in one-letter code: Large ribosomal subunit protein bL9 (151 aa).

It belongs to the bacterial ribosomal protein bL9 family.

Functionally, binds to the 23S rRNA. The chain is Large ribosomal subunit protein bL9 from Francisella philomiragia subsp. philomiragia (strain ATCC 25017 / CCUG 19701 / FSC 153 / O#319-036).